The sequence spans 265 residues: MNRLYPHPIIAREGWPIIGGGLALSLLVSICCGWWSLPFWVFTVFALQFFRDPAREIPLNPEAVLSPVDGRIVVVERARDPYRDVDALKISIFMNVFNVHSQKSPADCTVTKVVYNKGKFVNADLDKASTENERNAVLATTASGREITFVQVAGLVARRILCYTQAGAKLSRGERYGFIRFGSRVDMYLPVDAQAQVAIGDKVTGVSTVLARLPLTAPQTESEPESEPALQTAPVETAANPSAEQRQIEAAAAKIQAAVQDVLKD.

Ser183 serves as the catalytic Schiff-base intermediate with substrate; via pyruvic acid. The residue at position 183 (Ser183) is a Pyruvic acid (Ser); by autocatalysis. A disordered region spans residues Thr216–Arg246.

This sequence belongs to the phosphatidylserine decarboxylase family. PSD-A subfamily. Heterodimer of a large membrane-associated beta subunit and a small pyruvoyl-containing alpha subunit. Pyruvate serves as cofactor. Post-translationally, is synthesized initially as an inactive proenzyme. Formation of the active enzyme involves a self-maturation process in which the active site pyruvoyl group is generated from an internal serine residue via an autocatalytic post-translational modification. Two non-identical subunits are generated from the proenzyme in this reaction, and the pyruvate is formed at the N-terminus of the alpha chain, which is derived from the carboxyl end of the proenzyme. The post-translation cleavage follows an unusual pathway, termed non-hydrolytic serinolysis, in which the side chain hydroxyl group of the serine supplies its oxygen atom to form the C-terminus of the beta chain, while the remainder of the serine residue undergoes an oxidative deamination to produce ammonia and the pyruvoyl prosthetic group on the alpha chain.

It localises to the cell membrane. It catalyses the reaction a 1,2-diacyl-sn-glycero-3-phospho-L-serine + H(+) = a 1,2-diacyl-sn-glycero-3-phosphoethanolamine + CO2. Its pathway is phospholipid metabolism; phosphatidylethanolamine biosynthesis; phosphatidylethanolamine from CDP-diacylglycerol: step 2/2. In terms of biological role, catalyzes the formation of phosphatidylethanolamine (PtdEtn) from phosphatidylserine (PtdSer). This chain is Phosphatidylserine decarboxylase proenzyme, found in Neisseria meningitidis serogroup B (strain ATCC BAA-335 / MC58).